A 505-amino-acid chain; its full sequence is Deoxyguanosinetriphosphate triphosphohydrolase (505 aa).

The 208-residue stretch at 66-273 (RLTHSMEVQQ…MEAADDISYC (208 aa)) folds into the HD domain.

It belongs to the dGTPase family. Type 1 subfamily. In terms of assembly, homotetramer. The cofactor is Mg(2+).

The catalysed reaction is dGTP + H2O = 2'-deoxyguanosine + triphosphate + H(+). Its function is as follows. dGTPase preferentially hydrolyzes dGTP over the other canonical NTPs. In Escherichia fergusonii (strain ATCC 35469 / DSM 13698 / CCUG 18766 / IAM 14443 / JCM 21226 / LMG 7866 / NBRC 102419 / NCTC 12128 / CDC 0568-73), this protein is Deoxyguanosinetriphosphate triphosphohydrolase.